A 170-amino-acid polypeptide reads, in one-letter code: Adenine phosphoribosyltransferase (170 aa).

Belongs to the purine/pyrimidine phosphoribosyltransferase family. In terms of assembly, homodimer.

Its subcellular location is the cytoplasm. It carries out the reaction AMP + diphosphate = 5-phospho-alpha-D-ribose 1-diphosphate + adenine. The protein operates within purine metabolism; AMP biosynthesis via salvage pathway; AMP from adenine: step 1/1. Catalyzes a salvage reaction resulting in the formation of AMP, that is energically less costly than de novo synthesis. The polypeptide is Adenine phosphoribosyltransferase (Bacillus pumilus (strain SAFR-032)).